The sequence spans 102 residues: Small ribosomal subunit protein uS10 (102 aa).

The protein belongs to the universal ribosomal protein uS10 family. In terms of assembly, part of the 30S ribosomal subunit.

Involved in the binding of tRNA to the ribosomes. The sequence is that of Small ribosomal subunit protein uS10 from Desulforamulus reducens (strain ATCC BAA-1160 / DSM 100696 / MI-1) (Desulfotomaculum reducens).